We begin with the raw amino-acid sequence, 214 residues long: MTPTPIQNAPQSAVTRQALALAGVFQAAAVVDQLARTGQCDERAWNTLIRATLDTNPDSFATIYGGHHNNLRLGIDTLSAVMNRQHSDPAVMRYGFSLVLLMQKLRKDDAMMASLGERLTRIQGQAEHFGDTHENVIASLGQLYQDTLSTFRYRIVVQGDPSLLQSRMMPERVRAALLTGVRFALLWHQQGGRRWKLLFQRQGIKKSLAALDGH.

It belongs to the HflD family.

It is found in the cytoplasm. Its subcellular location is the cell inner membrane. In Chromohalobacter salexigens (strain ATCC BAA-138 / DSM 3043 / CIP 106854 / NCIMB 13768 / 1H11), this protein is High frequency lysogenization protein HflD homolog.